We begin with the raw amino-acid sequence, 232 residues long: Ras-related protein RabP (232 aa).

Residue 15–22 (GNYGVGKS) participates in GTP binding. Residues 35-40 (DNTTGF) carry the Effector region motif. GTP is bound by residues 58–62 (DTSGQ) and 118–121 (NKFD). Residues cysteine 229 and cysteine 230 are each lipidated (S-geranylgeranyl cysteine).

The protein belongs to the small GTPase superfamily. Rab family.

The protein localises to the cell membrane. The sequence is that of Ras-related protein RabP (rabP) from Dictyostelium discoideum (Social amoeba).